The chain runs to 210 residues: Large ribosomal subunit protein bL25 (210 aa).

Residues 190–210 (LKSEGAEGGEAEAGQAEEGEE) are disordered. Over residues 196 to 210 (EGGEAEAGQAEEGEE) the composition is skewed to acidic residues.

Belongs to the bacterial ribosomal protein bL25 family. CTC subfamily. In terms of assembly, part of the 50S ribosomal subunit; part of the 5S rRNA/L5/L18/L25 subcomplex. Contacts the 5S rRNA. Binds to the 5S rRNA independently of L5 and L18.

In terms of biological role, this is one of the proteins that binds to the 5S RNA in the ribosome where it forms part of the central protuberance. In Chelativorans sp. (strain BNC1), this protein is Large ribosomal subunit protein bL25.